A 302-amino-acid chain; its full sequence is Dioxygenase olcK (302 aa).

Residues H136, D138, and H213 each contribute to the Fe cation site.

It belongs to the PhyH family. In terms of assembly, homodimer. Requires Fe cation as cofactor.

The protein localises to the peroxisome matrix. It functions in the pathway secondary metabolite biosynthesis; terpenoid biosynthesis. Dioxygenase; part of the gene cluster that mediates the biosynthesis of 15-deoxyoxalicine B. The first step of the pathway is the synthesis of nicotinyl-CoA from nicotinic acid by the nicotinic acid-CoA ligase olcI. Nicotinyl-CoA is then a substrate of polyketide synthase olcA to produce 4-hydroxy-6-(3-pyridinyl)-2H-pyran-2-one (HPPO) which is further prenylated by the polyprenyl transferase olcH to yield geranylgeranyl-HPPO. Geranylgeranyl pyrophosphate is provided by the cluster-specific geranylgeranyl pyrophosphate synthase olcC. The FAD-dependent monooxygenase olcE catalyzes the epoxidation of geranylgeranyl-HPPO and the terpene cyclase olcD catalyzes the cyclization of the terpenoid component, resulting in the formation of the tricyclic terpene moiety seen in predecaturin E. The cytochrome P450 monooxygenase then catalyzes the allylic oxidation of predecaturin E, which is followed by spirocylization with concomitant loss of one molecule of water to form decaturin E. Decaturin E is the substrate of the cytochrome P450 monooxygenase olcJ which hydroxylates it at the C-29 position to form decaturin F. The short-chain dehydrogenase/reductase olcF may catalyze the oxidation of decaturin F to generate the 29-hydroxyl-27-one intermediate, and subsequent hemiacetal formation probably leads to the formation of decaturin C. The dioxygenase olcK may be a peroxisomal enzyme that catalyzes the hydroxylation of decaturin C into decaturin A once decaturin C is shuttled into the peroxisome by the MFS transporter olcL. Finally the cytochrome P450 monooxygenase olcB catalyzes the oxidative rearrangement to yield 15-deoxyoxalicine B. In the absence of olcJ, decaturin E may be shunted to a pathway in which it is oxidized to a ketone, possibly by olcF, to form decaturin D, which undergoes further allylic oxidation to yield decaturin G. Moreover, in the absence of oclK or oclL, oclB can convert decaturin C into 15-deoxyoxalicine A. This is Dioxygenase olcK from Penicillium canescens.